Reading from the N-terminus, the 136-residue chain is Large ribosomal subunit protein uL16c (136 aa).

It belongs to the universal ribosomal protein uL16 family. As to quaternary structure, part of the 50S ribosomal subunit.

It localises to the plastid. The protein resides in the chloroplast. This chain is Large ribosomal subunit protein uL16c, found in Citrus sinensis (Sweet orange).